A 273-amino-acid polypeptide reads, in one-letter code: Dermonecrotic toxin SdSicTox-betaIIB1aiii (273 aa).

His-4 is an active-site residue. 2 residues coordinate Mg(2+): Glu-24 and Asp-26. His-40 acts as the Nucleophile in catalysis. 2 disulfides stabilise this stretch: Cys-44–Cys-50 and Cys-46–Cys-189. Asp-84 lines the Mg(2+) pocket.

This sequence belongs to the arthropod phospholipase D family. Class II subfamily. The cofactor is Mg(2+). Expressed by the venom gland.

The protein resides in the secreted. It catalyses the reaction an N-(acyl)-sphingosylphosphocholine = an N-(acyl)-sphingosyl-1,3-cyclic phosphate + choline. It carries out the reaction an N-(acyl)-sphingosylphosphoethanolamine = an N-(acyl)-sphingosyl-1,3-cyclic phosphate + ethanolamine. The enzyme catalyses a 1-acyl-sn-glycero-3-phosphocholine = a 1-acyl-sn-glycero-2,3-cyclic phosphate + choline. The catalysed reaction is a 1-acyl-sn-glycero-3-phosphoethanolamine = a 1-acyl-sn-glycero-2,3-cyclic phosphate + ethanolamine. Functionally, dermonecrotic toxins cleave the phosphodiester linkage between the phosphate and headgroup of certain phospholipids (sphingolipid and lysolipid substrates), forming an alcohol (often choline) and a cyclic phosphate. This toxin acts on sphingomyelin (SM). It may also act on ceramide phosphoethanolamine (CPE), lysophosphatidylcholine (LPC) and lysophosphatidylethanolamine (LPE), but not on lysophosphatidylserine (LPS), and lysophosphatidylglycerol (LPG). It acts by transphosphatidylation, releasing exclusively cyclic phosphate products as second products. Induces dermonecrosis, hemolysis, increased vascular permeability, edema, inflammatory response, and platelet aggregation. This is Dermonecrotic toxin SdSicTox-betaIIB1aiii from Sicarius cf. damarensis (strain GJB-2008) (Six-eyed sand spider).